The following is a 532-amino-acid chain: Eukaryotic translation initiation factor 3 subunit D (532 aa).

The segment at 108–161 is disordered; the sequence is ATVLKTRGGAPRGGSFAGRGGSQRGGRFQNQPGRGPVGGQRGPNPRFGKSKFGW. Positions 117–131 are enriched in gly residues; it reads APRGGSFAGRGGSQR. Residues 132–141 show a composition bias toward low complexity; that stretch reads GGRFQNQPGR. Positions 296 to 310 are RNA gate; it reads PLDFITVDENAADPP.

The protein belongs to the eIF-3 subunit D family. Component of the eukaryotic translation initiation factor 3 (eIF-3) complex.

The protein resides in the cytoplasm. Functionally, mRNA cap-binding component of the eukaryotic translation initiation factor 3 (eIF-3) complex, which is involved in protein synthesis of a specialized repertoire of mRNAs and, together with other initiation factors, stimulates binding of mRNA and methionyl-tRNAi to the 40S ribosome. The eIF-3 complex specifically targets and initiates translation of a subset of mRNAs involved in cell proliferation. In the eIF-3 complex, eif3d specifically recognizes and binds the 7-methylguanosine cap of a subset of mRNAs. The chain is Eukaryotic translation initiation factor 3 subunit D from Yarrowia lipolytica (strain CLIB 122 / E 150) (Yeast).